The following is a 473-amino-acid chain: tRNA-2-methylthio-N(6)-dimethylallyladenosine synthase (473 aa).

An MTTase N-terminal domain is found at 5–125 (RKLHIKSYGC…LPQLLARADQ (121 aa)). Positions 14, 50, 88, 166, 170, and 173 each coordinate [4Fe-4S] cluster. The Radical SAM core domain occupies 152–384 (RARGISAFVT…QQLIDSQQSA (233 aa)). Positions 387-459 (KAAIGQTVDV…RYSLLGELAA (73 aa)) constitute a TRAM domain.

This sequence belongs to the methylthiotransferase family. MiaB subfamily. In terms of assembly, monomer. The cofactor is [4Fe-4S] cluster.

It is found in the cytoplasm. The catalysed reaction is N(6)-dimethylallyladenosine(37) in tRNA + (sulfur carrier)-SH + AH2 + 2 S-adenosyl-L-methionine = 2-methylsulfanyl-N(6)-dimethylallyladenosine(37) in tRNA + (sulfur carrier)-H + 5'-deoxyadenosine + L-methionine + A + S-adenosyl-L-homocysteine + 2 H(+). Functionally, catalyzes the methylthiolation of N6-(dimethylallyl)adenosine (i(6)A), leading to the formation of 2-methylthio-N6-(dimethylallyl)adenosine (ms(2)i(6)A) at position 37 in tRNAs that read codons beginning with uridine. This chain is tRNA-2-methylthio-N(6)-dimethylallyladenosine synthase, found in Rhodopseudomonas palustris (strain BisB5).